The sequence spans 287 residues: uncharacterized protein (287 aa).

Disordered regions lie at residues 109-175 (QEES…SSQD), 203-223 (IPPP…SQPV), and 257-287 (KESE…SSEE). Residues 110–136 (EESSSSLEEGIIEDPVVATPSPASAAP) are compositionally biased toward low complexity. The segment covering 143-152 (RKEFKNEKWK) has biased composition (basic and acidic residues). Positions 153–162 (EKKKQGRRRN) are enriched in basic residues. The span at 273-287 (SLEEASVHDRISSEE) shows a compositional bias: basic and acidic residues.

The protein belongs to the chlamydial CPn_0623/CT_504/TC_0791 family.

This is an uncharacterized protein from Chlamydia muridarum (strain MoPn / Nigg).